Here is a 313-residue protein sequence, read N- to C-terminus: Proline iminopeptidase (313 aa).

Residues 35–298 (KPVVILHGGP…TPGAGHSAFE (264 aa)) form the AB hydrolase-1 domain. The active-site Nucleophile is the S110. D266 is a catalytic residue. H294 (proton donor) is an active-site residue.

Belongs to the peptidase S33 family.

It localises to the cytoplasm. The catalysed reaction is Release of N-terminal proline from a peptide.. Specifically catalyzes the removal of N-terminal proline residues from peptides. This chain is Proline iminopeptidase (pip), found in Xylella fastidiosa (strain Temecula1 / ATCC 700964).